We begin with the raw amino-acid sequence, 116 residues long: Large ribosomal subunit protein bL19 (116 aa).

Belongs to the bacterial ribosomal protein bL19 family.

Its function is as follows. This protein is located at the 30S-50S ribosomal subunit interface and may play a role in the structure and function of the aminoacyl-tRNA binding site. This chain is Large ribosomal subunit protein bL19, found in Clostridium beijerinckii (strain ATCC 51743 / NCIMB 8052) (Clostridium acetobutylicum).